Here is a 184-residue protein sequence, read N- to C-terminus: Probable S-adenosyl-L-methionine-binding protein PYRAB06630 (184 aa).

Positions 9–140 (YRPIGIIHSP…YVPEFDVREN (132 aa)) constitute a TsaA-like domain. S-adenosyl-L-methionine-binding positions include 26-28 (PIQ), 65-66 (HR), Arg-89, and 120-123 (LDGT).

The protein belongs to the tRNA methyltransferase O family.

In Pyrococcus abyssi (strain GE5 / Orsay), this protein is Probable S-adenosyl-L-methionine-binding protein PYRAB06630.